The primary structure comprises 1241 residues: DNA-directed RNA polymerase subunit beta (1241 aa).

This sequence belongs to the RNA polymerase beta chain family. As to quaternary structure, the RNAP catalytic core consists of 2 alpha, 1 beta, 1 beta' and 1 omega subunit. When a sigma factor is associated with the core the holoenzyme is formed, which can initiate transcription.

It catalyses the reaction RNA(n) + a ribonucleoside 5'-triphosphate = RNA(n+1) + diphosphate. In terms of biological role, DNA-dependent RNA polymerase catalyzes the transcription of DNA into RNA using the four ribonucleoside triphosphates as substrates. This is DNA-directed RNA polymerase subunit beta from Clostridium botulinum (strain Alaska E43 / Type E3).